Reading from the N-terminus, the 627-residue chain is tRNA uridine 5-carboxymethylaminomethyl modification enzyme MnmG (627 aa).

14–19 contributes to the FAD binding site; that stretch reads GAGHAG. Position 275–289 (275–289) interacts with NAD(+); the sequence is GPRYCPSIEDKVVKF.

This sequence belongs to the MnmG family. In terms of assembly, homodimer. Heterotetramer of two MnmE and two MnmG subunits. FAD serves as cofactor.

Its subcellular location is the cytoplasm. NAD-binding protein involved in the addition of a carboxymethylaminomethyl (cmnm) group at the wobble position (U34) of certain tRNAs, forming tRNA-cmnm(5)s(2)U34. This chain is tRNA uridine 5-carboxymethylaminomethyl modification enzyme MnmG, found in Lachnoclostridium phytofermentans (strain ATCC 700394 / DSM 18823 / ISDg) (Clostridium phytofermentans).